Consider the following 62-residue polypeptide: Protein sigN176 (62 aa).

The sequence is that of Protein sigN176 from Dictyostelium discoideum (Social amoeba).